A 354-amino-acid chain; its full sequence is MCTRNKKDITTEYLNSKKIDRELKQESTTLQPLKLLLLGSGECGKSTIFKQIISFQDEATKKEYTPPSDYVIKNIFLNILTATSTFVRVAPSYNIEFSEEENQKIQSILNVFSDLENLDQTVFTSVSDNIKYLWNSKQIQSIYNNTNRIFQLNDSTEYLMSNIDRYSKPFKPTQNDFLRVRVKTTGIVEADFKIEAVPFKLVDVGGQKNQRRKWIHCFQDITCVLFVTSINDYDTLLEEDNSTSRFTDSLELFREMVNSNWFTKSPFVLFFNKIDLFKEKIKRIPVSQHLKDFNGNDHSYEETSQFIKNKFHTTIKNSNKIVYHHFTCALDSRAIEVVFNSIQHSLLMNVAEIL.

One can recognise a G-alpha domain in the interval 31 to 354; it reads QPLKLLLLGS…SLLMNVAEIL (324 aa). The segment at 34-47 is G1 motif; the sequence is KLLLLGSGECGKST. GTP-binding positions include 39–46, 178–184, 203–207, 272–275, and Ala-329; these read GSGECGKS, LRVRVKT, DVGGQ, and NKID. Ser-46 and Thr-184 together coordinate Mg(2+). A G2 motif region spans residues 176–184; it reads DFLRVRVKT. The interval 199 to 208 is G3 motif; sequence FKLVDVGGQK. Positions 268 to 275 are G4 motif; sequence VLFFNKID. Residues 327–332 are G5 motif; sequence TCALDS.

It belongs to the G-alpha family. G proteins are composed of 3 units; alpha, beta and gamma. The alpha chain contains the guanine nucleotide binding site.

In terms of biological role, guanine nucleotide-binding proteins (G proteins) are involved as modulators or transducers in various transmembrane signaling systems. The polypeptide is Guanine nucleotide-binding protein alpha-12 subunit (gpaL) (Dictyostelium discoideum (Social amoeba)).